The chain runs to 131 residues: Small ribosomal subunit protein uS11 (131 aa).

This sequence belongs to the universal ribosomal protein uS11 family. As to quaternary structure, part of the 30S ribosomal subunit.

Its function is as follows. Located on the platform of the 30S subunit. The chain is Small ribosomal subunit protein uS11 from Methanospirillum hungatei JF-1 (strain ATCC 27890 / DSM 864 / NBRC 100397 / JF-1).